The sequence spans 598 residues: UvrABC system protein C (598 aa).

The 81-residue stretch at 11–91 (QKPGVYIMHN…IKKYRPHYNI (81 aa)) folds into the GIY-YIG domain. Positions 195 to 230 (KTTIKKLKKDMNRYAKNMEFEKAAMLRDQIDTIKIT) constitute a UVR domain.

This sequence belongs to the UvrC family. In terms of assembly, interacts with UvrB in an incision complex.

It localises to the cytoplasm. Its function is as follows. The UvrABC repair system catalyzes the recognition and processing of DNA lesions. UvrC both incises the 5' and 3' sides of the lesion. The N-terminal half is responsible for the 3' incision and the C-terminal half is responsible for the 5' incision. The chain is UvrABC system protein C from Methanosphaera stadtmanae (strain ATCC 43021 / DSM 3091 / JCM 11832 / MCB-3).